Reading from the N-terminus, the 308-residue chain is Acetyl-coenzyme A carboxylase carboxyl transferase subunit beta (308 aa).

The region spanning L26 to L295 is the CoA carboxyltransferase N-terminal domain.

Belongs to the AccD/PCCB family. As to quaternary structure, acetyl-CoA carboxylase is a heterohexamer composed of biotin carboxyl carrier protein (AccB), biotin carboxylase (AccC) and two subunits each of ACCase subunit alpha (AccA) and ACCase subunit beta (AccD).

The protein localises to the cytoplasm. The catalysed reaction is N(6)-carboxybiotinyl-L-lysyl-[protein] + acetyl-CoA = N(6)-biotinyl-L-lysyl-[protein] + malonyl-CoA. It participates in lipid metabolism; malonyl-CoA biosynthesis; malonyl-CoA from acetyl-CoA: step 1/1. In terms of biological role, component of the acetyl coenzyme A carboxylase (ACC) complex. Biotin carboxylase (BC) catalyzes the carboxylation of biotin on its carrier protein (BCCP) and then the CO(2) group is transferred by the transcarboxylase to acetyl-CoA to form malonyl-CoA. The protein is Acetyl-coenzyme A carboxylase carboxyl transferase subunit beta of Mesorhizobium japonicum (strain LMG 29417 / CECT 9101 / MAFF 303099) (Mesorhizobium loti (strain MAFF 303099)).